Here is a 192-residue protein sequence, read N- to C-terminus: Cytochrome b-245 light chain (192 aa).

Topologically, residues 2–7 (GQIEWA) are cytoplasmic. Residues 8-30 (MWANEQALASGLILITGGIVATA) form a helical membrane-spanning segment. At 31-35 (GQFAQ) the chain is on the extracellular side. The helical transmembrane segment at 36–53 (WYLGAYSIAAGVLICLLE) threads the bilayer. The Cytoplasmic segment spans residues 54 to 69 (YPRGKRSKGSTMERCG). The stretch at 70–80 (QKYLTRAVKVF) is an intramembrane region. Topologically, residues 81–86 (GPLTSN) are cytoplasmic. The chain crosses the membrane as a helical span at residues 87-104 (YYIRAFLHLGLSVPAGFL). A topological domain (extracellular) is located at residue Leu105. A helical transmembrane segment spans residues 106 to 126 (ATILGTACLAIASSIYLLAAI). Residues 127–192 (HGEHWTPIET…NPMPVTDEVV (66 aa)) lie on the Cytoplasmic side of the membrane. Residues 134–192 (IETKPKERPQVGGTIKQPPSNPPPRPPAEARKKPSEEEVAGVPGGGPQENPMPVTDEVV) are disordered. Thr147 is modified (phosphothreonine). A Glycyl lysine isopeptide (Lys-Gly) (interchain with G-Cter in ubiquitin) cross-link involves residue Lys149. The residue at position 168 (Ser168) is a Phosphoserine.

This sequence belongs to the p22phox family. In terms of assembly, component of the phagocyte NADPH oxidase core complex/cytochrome b558 complex, composed of CYBB (heavy chain (beta)) and CYBA (light chain (alpha)). Component of the phagocyte NADPH oxidase complex composed of an obligatory core heterodimer formed by the membrane proteins CYBA and CYBB and the cytosolic regulatory subunits NCF1/p47-phox, NCF2/p67-phox, NCF4/p40-phox and the small GTPase RAC1 or RAC2. Interacts with NCF1 (via SH3 domain). Interacts with SH3PXD2A. Interacts with DUOX1, DUOX2 and TPO. Interacts with NOX4; this interaction mediates superoxide generation. Interacts with calprotectin (S100A8/9). Interacts with GBP7. Interacts with NOXO1. Forms a heterodimer with NOX3 and is essential for activity and cell membrane localization of NOX3. Interacts with NOX1. Phosphorylation at Thr-147 enhances NADPH oxidase activity by promoting NCF1/p47-phox binding. Post-translationally, ubiquitinated at Lys-149 likely by RNF145.

Its subcellular location is the cell membrane. Functionally, subunit of NADPH oxidase complexes that is required for the NADPH oxidase activity that generates, in various cell types, superoxide from molecular oxygen utilizing NADPH as an electron donor. Subunit of the phagocyte NADPH oxidase complex that mediates the transfer of electrons from cytosolic NADPH to O2 to produce the superoxide anion (O2(-)). In the activated complex, electrons are first transferred from NADPH to flavin adenine dinucleotide (FAD) and subsequently transferred via two heme molecules to molecular oxygen, producing superoxide through an outer-sphere reaction. Activation of the NADPH oxidase complex is initiated by the assembly of cytosolic subunits of the NADPH oxidase complex with the core NADPH oxidase complex to form a complex at the plasma membrane or phagosomal membrane. This activation process is initiated by phosphorylation dependent binding of the cytosolic NCF1/p47-phox subunit to the C-terminus of CYBA/p22-phox. Aassociates with NOX3 to form a functional NADPH oxidase constitutively generating superoxide. The sequence is that of Cytochrome b-245 light chain from Tursiops truncatus (Atlantic bottle-nosed dolphin).